The chain runs to 608 residues: Eukaryotic translation initiation factor 2A (608 aa).

Residues 1–42 form a disordered region; the sequence is MSAPNNNNNNTTTTTTTSPSPSQSSPTLTSVASNSTTTTTTE. WD repeat units lie at residues 115-161, 207-255, 310-350, and 351-393; these read INRP…ILYK, IKLQ…EYCS, NIKG…PLVD, and FGLN…RICG. 2 stretches are compositionally biased toward low complexity: residues 466–478 and 520–544; these read SIQQ…PQPQ and STFK…TTKP. Disordered regions lie at residues 466 to 499 and 520 to 554; these read SIQQ…TSPP and STFK…RELT. The segment covering 545 to 554 has biased composition (basic and acidic residues); that stretch reads AADEPKRELT. Residues 550–608 adopt a coiled-coil conformation; the sequence is KRELTPIEKKIRNVERKLKEVEVLKEKLNSGEFIPPTAIEKINNEQKFLEELRKLQSEL.

It belongs to the WD repeat EIF2A family.

In terms of biological role, functions in the early steps of protein synthesis of a small number of specific mRNAs. Acts by directing the binding of methionyl-tRNAi to 40S ribosomal subunits. In contrast to the eIF-2 complex, it binds methionyl-tRNAi to 40S subunits in a codon-dependent manner, whereas the eIF-2 complex binds methionyl-tRNAi to 40S subunits in a GTP-dependent manner. The chain is Eukaryotic translation initiation factor 2A (eif2a) from Dictyostelium discoideum (Social amoeba).